Here is a 364-residue protein sequence, read N- to C-terminus: Fructose-bisphosphate aldolase B (364 aa).

2 residues coordinate substrate: arginine 56 and lysine 147. Residue glutamate 188 is the Proton acceptor of the active site. The active-site Schiff-base intermediate with dihydroxyacetone-P is the lysine 230.

Belongs to the class I fructose-bisphosphate aldolase family. As to quaternary structure, homotetramer.

Its subcellular location is the cytoplasm. The protein resides in the cytoskeleton. It localises to the microtubule organizing center. The protein localises to the centrosome. It is found in the centriolar satellite. It catalyses the reaction beta-D-fructose 1,6-bisphosphate = D-glyceraldehyde 3-phosphate + dihydroxyacetone phosphate. Its pathway is carbohydrate degradation; glycolysis; D-glyceraldehyde 3-phosphate and glycerone phosphate from D-glucose: step 4/4. In Sparus aurata (Gilthead sea bream), this protein is Fructose-bisphosphate aldolase B (aldob).